The primary structure comprises 122 residues: Large ribosomal subunit protein uL14c (122 aa).

The protein belongs to the universal ribosomal protein uL14 family. Part of the 50S ribosomal subunit.

Its subcellular location is the plastid. The protein resides in the chloroplast. In terms of biological role, binds to 23S rRNA. In Coffea arabica (Arabian coffee), this protein is Large ribosomal subunit protein uL14c.